A 91-amino-acid polypeptide reads, in one-letter code: MSHPPSIILTSGQIFIVVLHESFHGHFFFARPAMHASDPEPAHGLDKCQLRYNPFGEDGLLHLGEGGLKVVKVHEAVVGPGVDCVGAVGHD.

This is an uncharacterized protein from Homo sapiens (Human).